The sequence spans 94 residues: U27-theraphotoxin-Cg1a (94 aa).

The first 22 residues, methionine 1–glycine 22, serve as a signal peptide directing secretion. A propeptide spanning residues aspartate 23–arginine 58 is cleaved from the precursor. Cystine bridges form between cysteine 60–cysteine 78, cysteine 67–cysteine 83, and cysteine 77–cysteine 88.

Belongs to the neurotoxin 14 (magi-1) family. OAIP-1 subfamily. As to expression, expressed by the venom gland.

It is found in the secreted. Functionally, probable ion channel inhibitor. In Chilobrachys guangxiensis (Chinese earth tiger tarantula), this protein is U27-theraphotoxin-Cg1a.